The following is a 316-amino-acid chain: Apolipoprotein E (316 aa).

The signal sequence occupies residues 1–18; that stretch reads MKVLWVAVVVALLAGCQA. 8 tandem repeats follow at residues 79–100, 101–122, 123–144, 145–166, 167–188, 189–210, 211–232, and 233–254. Residues 79 to 254 are 8 X 22 AA approximate tandem repeats; it reads ALMEETMKEV…RLDKIRQQLE (176 aa). M142 carries the post-translational modification Methionine sulfoxide. S146 carries the phosphoserine; by FAM20C modification. Residues 157-167 are LDL and other lipoprotein receptors binding; it reads HLRKLRKRLLR. Heparin is bound at residue 161–164; sequence LRKR. Residues 209 to 289 form a lipid-binding and lipoprotein association region; the sequence is AATLSTLAGQ…SWFEPLVEDM (81 aa). The O-linked (GalNAc...) threonine glycan is linked to T211. Residue 228–235 coordinates heparin; that stretch reads RQKLHGRL. Residues 265–316 are homooligomerization; it reads NQMRLQAEAFQARLRSWFEPLVEDMQRQWAGLVEKVQLALRPSPTSPPSENH. The interval 277–289 is specificity for association with VLDL; sequence RLRSWFEPLVEDM.

Belongs to the apolipoprotein A1/A4/E family. Homotetramer. May interact with ABCA1; functionally associated with ABCA1 in the biogenesis of HDLs. May interact with APP/A4 amyloid-beta peptide; the interaction is extremely stable in vitro but its physiological significance is unclear. May interact with MAPT. May interact with MAP2. In the cerebrospinal fluid, interacts with secreted SORL1. Interacts with PMEL; this allows the loading of PMEL luminal fragment on ILVs to induce fibril nucleation. APOE exists as multiple glycosylated and sialylated glycoforms within cells and in plasma. The extent of glycosylation and sialylation are tissue and context specific. In terms of processing, glycated in plasma VLDL. Post-translationally, phosphorylated by FAM20C in the extracellular medium.

The protein resides in the secreted. Its subcellular location is the extracellular space. It is found in the extracellular matrix. It localises to the extracellular vesicle. The protein localises to the endosome. The protein resides in the multivesicular body. APOE is an apolipoprotein, a protein associating with lipid particles, that mainly functions in lipoprotein-mediated lipid transport between organs via the plasma and interstitial fluids. APOE is a core component of plasma lipoproteins and is involved in their production, conversion and clearance. Apolipoproteins are amphipathic molecules that interact both with lipids of the lipoprotein particle core and the aqueous environment of the plasma. As such, APOE associates with chylomicrons, chylomicron remnants, very low density lipoproteins (VLDL) and intermediate density lipoproteins (IDL) but shows a preferential binding to high-density lipoproteins (HDL). It also binds a wide range of cellular receptors including the LDL receptor/LDLR and the very low-density lipoprotein receptor/VLDLR that mediate the cellular uptake of the APOE-containing lipoprotein particles. Finally, APOE also has a heparin-binding activity and binds heparan-sulfate proteoglycans on the surface of cells, a property that supports the capture and the receptor-mediated uptake of APOE-containing lipoproteins by cells. The sequence is that of Apolipoprotein E (APOE) from Bos mutus grunniens (Wild yak).